A 795-amino-acid polypeptide reads, in one-letter code: Phenylalanine--tRNA ligase beta subunit (795 aa).

Residues Ala39–Arg148 enclose the tRNA-binding domain. The B5 domain occupies Pro401 to Ala476. Asp454, Asp460, Glu463, and Glu464 together coordinate Mg(2+). In terms of domain architecture, FDX-ACB spans Ser701–Arg794.

The protein belongs to the phenylalanyl-tRNA synthetase beta subunit family. Type 1 subfamily. As to quaternary structure, tetramer of two alpha and two beta subunits. It depends on Mg(2+) as a cofactor.

The protein resides in the cytoplasm. The enzyme catalyses tRNA(Phe) + L-phenylalanine + ATP = L-phenylalanyl-tRNA(Phe) + AMP + diphosphate + H(+). This chain is Phenylalanine--tRNA ligase beta subunit, found in Idiomarina loihiensis (strain ATCC BAA-735 / DSM 15497 / L2-TR).